Here is a 694-residue protein sequence, read N- to C-terminus: Elongation factor G (694 aa).

The tr-type G domain maps to 8-287 (EDYRNFGIMA…AVVEFLPAPT (280 aa)). Residues 17 to 24 (AHIDAGKT), 86 to 90 (DTPGH), and 140 to 143 (NKMD) contribute to the GTP site.

This sequence belongs to the TRAFAC class translation factor GTPase superfamily. Classic translation factor GTPase family. EF-G/EF-2 subfamily.

The protein resides in the cytoplasm. Its function is as follows. Catalyzes the GTP-dependent ribosomal translocation step during translation elongation. During this step, the ribosome changes from the pre-translocational (PRE) to the post-translocational (POST) state as the newly formed A-site-bound peptidyl-tRNA and P-site-bound deacylated tRNA move to the P and E sites, respectively. Catalyzes the coordinated movement of the two tRNA molecules, the mRNA and conformational changes in the ribosome. The chain is Elongation factor G from Brucella ovis (strain ATCC 25840 / 63/290 / NCTC 10512).